Reading from the N-terminus, the 2620-residue chain is Highly reducing polyketide synthase tazB (2620 aa).

Residues Met1–Asn22 are disordered. Residues Met1–Asp416 enclose the Ketosynthase family 3 (KS3) domain. Basic and acidic residues predominate over residues Thr9 to Asn22. Active-site for beta-ketoacyl synthase activity residues include Cys166, His301, and His340. Residues Gly460–His481 form a disordered region. Low complexity predominate over residues Ser470–His481. The tract at residues Val601 to Asp923 is malonyl-CoA:ACP transacylase (MAT) domain. Residues His993–Ser1128 form an N-terminal hotdog fold region. The segment at His993–Lys1313 is dehydratase (DH) domain. Positions His993–Glu1318 constitute a PKS/mFAS DH domain. The Proton acceptor; for dehydratase activity role is filled by His1025. The interval Thr1157–Glu1318 is C-terminal hotdog fold. The active-site Proton donor; for dehydratase activity is the Asp1225. A methyltransferase (CMet) domain region spans residues Gly1379–Tyr1680. The enoyl reductase (ER) domain stretch occupies residues Gly1910–Leu2227. The ketoreductase (KR) domain stretch occupies residues Ser2251–Val2425. Residues Glu2539–Arg2620 enclose the Carrier domain. The residue at position 2576 (Ser2576) is an O-(pantetheine 4'-phosphoryl)serine.

The protein operates within secondary metabolite biosynthesis. In terms of biological role, highly reducing polyketide synthase; part of the gene cluster that mediates the biosynthesis of azaterrilone A and other azaphilones, a class of fungal metabolites characterized by a highly oxygenated pyrano-quinone bicyclic core and exhibiting a broad range of bioactivities. The first step of the pathway begins with the non-reducing polyketide synthase tazA that assembles one acetyl-CoA starter unit, five malonyl-CoA units, and catalyzes a series of Claisen condensations, methylation, PT-mediated cyclization, and finally releases the first hexaketide precursor through the R-domain. The tazA product then undergoes reduction on its terminal ketone and the following pyran-ring formation by yet undetermined enzyme(s). Dehydration and enoyl reduction, possibly involving the trans-enoyl reductase tazE leads to the next intermediate. TazD is predicted as an acetyltransferase and might catalyze the acetylation steps leading to the synthesis of azaterrilone A. Azaterrilone A is not the final product of the taz pathway and both the highly reducing polyketide synthase tazB and the dual enzyme tazHJ catalyze late steps of the pathway, leading to the production of the 2 final stereoisomers that contain additional polyketide modification whose structures have still to be determined. The sequence is that of Highly reducing polyketide synthase tazB from Aspergillus terreus (strain NIH 2624 / FGSC A1156).